The sequence spans 172 residues: Adenine phosphoribosyltransferase (172 aa).

This sequence belongs to the purine/pyrimidine phosphoribosyltransferase family. In terms of assembly, homodimer.

The protein localises to the cytoplasm. It catalyses the reaction AMP + diphosphate = 5-phospho-alpha-D-ribose 1-diphosphate + adenine. It participates in purine metabolism; AMP biosynthesis via salvage pathway; AMP from adenine: step 1/1. Its function is as follows. Catalyzes a salvage reaction resulting in the formation of AMP, that is energically less costly than de novo synthesis. This is Adenine phosphoribosyltransferase from Streptococcus thermophilus (strain ATCC BAA-250 / LMG 18311).